Reading from the N-terminus, the 171-residue chain is S-ribosylhomocysteine lyase (171 aa).

Residues His-54, His-58, and Cys-128 each contribute to the Fe cation site.

The protein belongs to the LuxS family. In terms of assembly, homodimer. Fe cation is required as a cofactor.

The catalysed reaction is S-(5-deoxy-D-ribos-5-yl)-L-homocysteine = (S)-4,5-dihydroxypentane-2,3-dione + L-homocysteine. Functionally, involved in the synthesis of autoinducer 2 (AI-2) which is secreted by bacteria and is used to communicate both the cell density and the metabolic potential of the environment. The regulation of gene expression in response to changes in cell density is called quorum sensing. Catalyzes the transformation of S-ribosylhomocysteine (RHC) to homocysteine (HC) and 4,5-dihydroxy-2,3-pentadione (DPD). The protein is S-ribosylhomocysteine lyase of Cronobacter sakazakii (strain ATCC BAA-894) (Enterobacter sakazakii).